The sequence spans 283 residues: Probable endonuclease 4 (283 aa).

The Zn(2+) site is built by His-69, His-109, Glu-145, Asp-179, His-182, His-216, Asp-229, His-231, and Glu-261.

This sequence belongs to the AP endonuclease 2 family. Zn(2+) serves as cofactor.

It carries out the reaction Endonucleolytic cleavage to 5'-phosphooligonucleotide end-products.. Functionally, endonuclease IV plays a role in DNA repair. It cleaves phosphodiester bonds at apurinic or apyrimidinic (AP) sites, generating a 3'-hydroxyl group and a 5'-terminal sugar phosphate. The protein is Probable endonuclease 4 of Campylobacter curvus (strain 525.92).